We begin with the raw amino-acid sequence, 111 residues long: uncharacterized protein (111 aa).

A run of 2 helical transmembrane segments spans residues 7–27 (ILNIILALAVPIGLLFISMMI) and 53–73 (AFAMFIPLLIIALTLLVTFLH).

It localises to the cell membrane. This is an uncharacterized protein from Bacillus anthracis.